The sequence spans 400 residues: Acetate kinase (400 aa).

Asn-10 is a binding site for Mg(2+). Lys-17 serves as a coordination point for ATP. Arg-89 serves as a coordination point for substrate. Asp-148 acts as the Proton donor/acceptor in catalysis. Residues His-208–Gly-212, Asp-283–Arg-285, and Gly-331–Asn-335 each bind ATP. A Mg(2+)-binding site is contributed by Glu-385.

Belongs to the acetokinase family. As to quaternary structure, homodimer. Mg(2+) is required as a cofactor. The cofactor is Mn(2+).

It localises to the cytoplasm. The catalysed reaction is acetate + ATP = acetyl phosphate + ADP. It functions in the pathway metabolic intermediate biosynthesis; acetyl-CoA biosynthesis; acetyl-CoA from acetate: step 1/2. In terms of biological role, catalyzes the formation of acetyl phosphate from acetate and ATP. Can also catalyze the reverse reaction. The polypeptide is Acetate kinase (Haemophilus ducreyi (strain 35000HP / ATCC 700724)).